A 255-amino-acid chain; its full sequence is tRNA pseudouridine synthase A (255 aa).

The Nucleophile role is filled by Asp-52. Tyr-111 lines the substrate pocket.

Belongs to the tRNA pseudouridine synthase TruA family. As to quaternary structure, homodimer.

It carries out the reaction uridine(38/39/40) in tRNA = pseudouridine(38/39/40) in tRNA. Formation of pseudouridine at positions 38, 39 and 40 in the anticodon stem and loop of transfer RNAs. In Cereibacter sphaeroides (strain ATCC 17023 / DSM 158 / JCM 6121 / CCUG 31486 / LMG 2827 / NBRC 12203 / NCIMB 8253 / ATH 2.4.1.) (Rhodobacter sphaeroides), this protein is tRNA pseudouridine synthase A.